The sequence spans 557 residues: Ubiquitin C-terminal hydrolase 22 (557 aa).

The UBP-type; degenerate zinc-finger motif lies at 36–130; the sequence is FRCFNDARIK…VSKQLFGLGM (95 aa). Residues C56, C59, C69, C72, C77, H80, H84, and H91 each coordinate Zn(2+). The 355-residue stretch at 177-531 folds into the USP domain; the sequence is RGLNNLGSTC…ECYMLFYAQE (355 aa). The active-site Nucleophile is the C186. The active-site Proton acceptor is the H491.

This sequence belongs to the peptidase C19 family. Component of a deubiquitination module (DUB module) formed by ENY2, SGF11, and UBP22 in Arabidopsis. Interacts directly with SGF11, but not with ENY2.

The protein resides in the nucleus. The protein localises to the nucleoplasm. The enzyme catalyses Thiol-dependent hydrolysis of ester, thioester, amide, peptide and isopeptide bonds formed by the C-terminal Gly of ubiquitin (a 76-residue protein attached to proteins as an intracellular targeting signal).. In terms of biological role, component of a deubiquitination module (DUB module) that specifically deubiquinates monoubiquinated histone H2B (H2Bub). Does not seem to be a component of the TREX-2 complex. Seems to act independently of the SAGA multiprotein complex. The DUB module is responsible for the major H2Bub deubiquitinase activity in Arabidopsis. The protein is Ubiquitin C-terminal hydrolase 22 of Arabidopsis thaliana (Mouse-ear cress).